A 359-amino-acid chain; its full sequence is Peptide chain release factor 1 (359 aa).

Position 236 is an N5-methylglutamine (glutamine 236).

Belongs to the prokaryotic/mitochondrial release factor family. Methylated by PrmC. Methylation increases the termination efficiency of RF1.

Its subcellular location is the cytoplasm. Its function is as follows. Peptide chain release factor 1 directs the termination of translation in response to the peptide chain termination codons UAG and UAA. This chain is Peptide chain release factor 1, found in Streptococcus pyogenes serotype M12 (strain MGAS2096).